The chain runs to 511 residues: 3-octaprenyl-4-hydroxybenzoate carboxy-lyase (511 aa).

Residue asparagine 176 participates in Mn(2+) binding. Prenylated FMN contacts are provided by residues isoleucine 179–arginine 181, arginine 193–leucine 195, and arginine 198–glycine 199. Residue glutamate 242 participates in Mn(2+) binding. Aspartate 311 (proton donor) is an active-site residue.

This sequence belongs to the UbiD family. In terms of assembly, homohexamer. Requires prenylated FMN as cofactor. It depends on Mn(2+) as a cofactor.

The protein resides in the cell membrane. The enzyme catalyses a 4-hydroxy-3-(all-trans-polyprenyl)benzoate + H(+) = a 2-(all-trans-polyprenyl)phenol + CO2. It participates in cofactor biosynthesis; ubiquinone biosynthesis. Its function is as follows. Catalyzes the decarboxylation of 3-octaprenyl-4-hydroxy benzoate to 2-octaprenylphenol, an intermediate step in ubiquinone biosynthesis. This is 3-octaprenyl-4-hydroxybenzoate carboxy-lyase from Laribacter hongkongensis (strain HLHK9).